The primary structure comprises 1142 residues: Serine/threonine-protein kinase GIN4 (1142 aa).

The Protein kinase domain maps to 19–289 (WKLGETLGLG…TRDILKHPLL (271 aa)). ATP is bound by residues 25-33 (LGLGSTGKV) and lysine 48. Aspartate 156 (proton acceptor) is an active-site residue. 2 disordered regions span residues 378–412 (KKRQ…SVTS) and 425–469 (ASSA…RNKR). A compositionally biased stretch (low complexity) spans 382-395 (SISSVSVSPSKKVS). Residue serine 406 is modified to Phosphoserine. Positions 425 to 440 (ASSASSSNLTTPGSSK) are enriched in low complexity. Residues 441-452 (RLSKNFSSKKKL) are compositionally biased toward basic residues. Positions 454–465 (TIVNQSSPTPAS) are enriched in polar residues. Serine 465, serine 471, serine 617, serine 689, serine 719, serine 805, serine 807, and serine 883 each carry phosphoserine. Residues 676–698 (DPGIMFSSPTEEVSPVEPKRTEN) are disordered. Threonine 884 carries the post-translational modification Phosphothreonine. Residues 903–1031 (NEAKQTDNLH…NTAIGNGSFF (129 aa)) are disordered. Composition is skewed to basic and acidic residues over residues 923–937 (NELR…DQAH), 962–984 (KEEK…KVVD), and 996–1021 (KIRE…KQDK). Serine 930 bears the Phosphoserine mark.

The protein belongs to the protein kinase superfamily. CAMK Ser/Thr protein kinase family. NIM1 subfamily. In terms of assembly, component of the GIN4 complex composed of at least BNI5, CDC3, CDC10, CDC11, CDC12, GIN4, NAP1 and SHS1 which forms a ring at the bud neck.

It is found in the cytoplasm. Its subcellular location is the bud neck. The enzyme catalyses L-seryl-[protein] + ATP = O-phospho-L-seryl-[protein] + ADP + H(+). It catalyses the reaction L-threonyl-[protein] + ATP = O-phospho-L-threonyl-[protein] + ADP + H(+). Functionally, serine/threonine-protein kinase which regulates the localization and the function of the septins during mitosis. Phosphorylates SHS1. The chain is Serine/threonine-protein kinase GIN4 (GIN4) from Saccharomyces cerevisiae (strain ATCC 204508 / S288c) (Baker's yeast).